A 355-amino-acid chain; its full sequence is Uroporphyrinogen decarboxylase (355 aa).

Residues 27–31 (RQAGR), Asp-77, Tyr-154, Thr-209, and His-328 each bind substrate.

It belongs to the uroporphyrinogen decarboxylase family. In terms of assembly, homodimer.

The protein localises to the cytoplasm. It catalyses the reaction uroporphyrinogen III + 4 H(+) = coproporphyrinogen III + 4 CO2. It functions in the pathway porphyrin-containing compound metabolism; protoporphyrin-IX biosynthesis; coproporphyrinogen-III from 5-aminolevulinate: step 4/4. Functionally, catalyzes the decarboxylation of four acetate groups of uroporphyrinogen-III to yield coproporphyrinogen-III. The chain is Uroporphyrinogen decarboxylase from Photobacterium profundum (strain SS9).